Reading from the N-terminus, the 169-residue chain is Ecotin (169 aa).

The N-terminal stretch at 1 to 21 (MKKCSIILASVLLATSINAIA) is a signal peptide. C76 and C113 are disulfide-bonded.

The protein belongs to the protease inhibitor I11 (ecotin) family. Homodimer.

Its subcellular location is the periplasm. Its function is as follows. General inhibitor of pancreatic serine proteases: inhibits chymotrypsin, trypsin, elastases, factor X, kallikrein as well as a variety of other proteases. The chain is Ecotin from Yersinia pseudotuberculosis serotype O:1b (strain IP 31758).